The sequence spans 311 residues: Formimidoylglutamase (311 aa).

Residues histidine 130, aspartate 155, histidine 157, aspartate 159, cysteine 242, and aspartate 244 each contribute to the Mn(2+) site.

Belongs to the arginase family. It depends on Mn(2+) as a cofactor.

It carries out the reaction N-formimidoyl-L-glutamate + H2O = formamide + L-glutamate. Its pathway is amino-acid degradation; L-histidine degradation into L-glutamate; L-glutamate from N-formimidoyl-L-glutamate (hydrolase route): step 1/1. Its function is as follows. Catalyzes the conversion of N-formimidoyl-L-glutamate to L-glutamate and formamide. The sequence is that of Formimidoylglutamase from Staphylococcus epidermidis (strain ATCC 35984 / DSM 28319 / BCRC 17069 / CCUG 31568 / BM 3577 / RP62A).